Here is a 277-residue protein sequence, read N- to C-terminus: Phosphoenolpyruvate synthase regulatory protein (277 aa).

Glycine 157–threonine 164 is a binding site for ADP.

Belongs to the pyruvate, phosphate/water dikinase regulatory protein family. PSRP subfamily.

The catalysed reaction is [pyruvate, water dikinase] + ADP = [pyruvate, water dikinase]-phosphate + AMP + H(+). It carries out the reaction [pyruvate, water dikinase]-phosphate + phosphate + H(+) = [pyruvate, water dikinase] + diphosphate. Its function is as follows. Bifunctional serine/threonine kinase and phosphorylase involved in the regulation of the phosphoenolpyruvate synthase (PEPS) by catalyzing its phosphorylation/dephosphorylation. The chain is Phosphoenolpyruvate synthase regulatory protein from Escherichia fergusonii (strain ATCC 35469 / DSM 13698 / CCUG 18766 / IAM 14443 / JCM 21226 / LMG 7866 / NBRC 102419 / NCTC 12128 / CDC 0568-73).